We begin with the raw amino-acid sequence, 211 residues long: Thiamine-phosphate synthase (211 aa).

4-amino-2-methyl-5-(diphosphooxymethyl)pyrimidine contacts are provided by residues Q37–K41 and N69. Residues D70 and D89 each contribute to the Mg(2+) site. S108 lines the 4-amino-2-methyl-5-(diphosphooxymethyl)pyrimidine pocket. A 2-[(2R,5Z)-2-carboxy-4-methylthiazol-5(2H)-ylidene]ethyl phosphate-binding site is contributed by T134 to T136. K137 contributes to the 4-amino-2-methyl-5-(diphosphooxymethyl)pyrimidine binding site. 2-[(2R,5Z)-2-carboxy-4-methylthiazol-5(2H)-ylidene]ethyl phosphate contacts are provided by residues G166 and V186–S187.

Belongs to the thiamine-phosphate synthase family. Mg(2+) is required as a cofactor.

It catalyses the reaction 2-[(2R,5Z)-2-carboxy-4-methylthiazol-5(2H)-ylidene]ethyl phosphate + 4-amino-2-methyl-5-(diphosphooxymethyl)pyrimidine + 2 H(+) = thiamine phosphate + CO2 + diphosphate. It carries out the reaction 2-(2-carboxy-4-methylthiazol-5-yl)ethyl phosphate + 4-amino-2-methyl-5-(diphosphooxymethyl)pyrimidine + 2 H(+) = thiamine phosphate + CO2 + diphosphate. The enzyme catalyses 4-methyl-5-(2-phosphooxyethyl)-thiazole + 4-amino-2-methyl-5-(diphosphooxymethyl)pyrimidine + H(+) = thiamine phosphate + diphosphate. It functions in the pathway cofactor biosynthesis; thiamine diphosphate biosynthesis; thiamine phosphate from 4-amino-2-methyl-5-diphosphomethylpyrimidine and 4-methyl-5-(2-phosphoethyl)-thiazole: step 1/1. Condenses 4-methyl-5-(beta-hydroxyethyl)thiazole monophosphate (THZ-P) and 2-methyl-4-amino-5-hydroxymethyl pyrimidine pyrophosphate (HMP-PP) to form thiamine monophosphate (TMP). In Salmonella newport (strain SL254), this protein is Thiamine-phosphate synthase.